The chain runs to 292 residues: S-methyl-5'-thioadenosine phosphorylase (292 aa).

Phosphate is bound by residues S11, 53–54 (RH), and 86–87 (SA). Residue M184 coordinates substrate. Phosphate is bound at residue T185. 208–210 (DYD) contacts substrate.

The protein belongs to the PNP/MTAP phosphorylase family. MTAP subfamily. As to quaternary structure, homohexamer. Dimer of a homotrimer.

The enzyme catalyses S-methyl-5'-thioadenosine + phosphate = 5-(methylsulfanyl)-alpha-D-ribose 1-phosphate + adenine. Its pathway is amino-acid biosynthesis; L-methionine biosynthesis via salvage pathway; S-methyl-5-thio-alpha-D-ribose 1-phosphate from S-methyl-5'-thioadenosine (phosphorylase route): step 1/1. In terms of biological role, catalyzes the reversible phosphorylation of S-methyl-5'-thioadenosine (MTA) to adenine and 5-methylthioribose-1-phosphate. Involved in the breakdown of MTA, a major by-product of polyamine biosynthesis. Responsible for the first step in the methionine salvage pathway after MTA has been generated from S-adenosylmethionine. Has broad substrate specificity with 6-aminopurine nucleosides as preferred substrates. The polypeptide is S-methyl-5'-thioadenosine phosphorylase (Koribacter versatilis (strain Ellin345)).